A 190-amino-acid polypeptide reads, in one-letter code: Interferon alpha-7 (190 aa).

The N-terminal stretch at methionine 1 to glycine 23 is a signal peptide. Disulfide bonds link cysteine 24-cysteine 122 and cysteine 52-cysteine 162. The N-linked (GlcNAc...) asparagine glycan is linked to asparagine 101.

This sequence belongs to the alpha/beta interferon family.

It localises to the secreted. Produced by macrophages, IFN-alpha have antiviral activities. Interferon stimulates the production of two enzymes: a protein kinase and an oligoadenylate synthetase. The chain is Interferon alpha-7 (Ifna7) from Mus musculus (Mouse).